We begin with the raw amino-acid sequence, 473 residues long: Photosystem II CP43 reaction center protein (473 aa).

The propeptide occupies 1–14 (MKTLYSLRRFYHVE). Residue Thr-15 is modified to N-acetylthreonine. Thr-15 carries the post-translational modification Phosphothreonine. The next 5 membrane-spanning stretches (helical) occupy residues 69–93 (LFEV…PHLA), 134–155 (LLGP…KDRN), 178–200 (KALY…RKIT), 255–275 (KPFA…LSYS), and 291–312 (WFNN…ASQA). Residue Glu-367 participates in [CaMn4O5] cluster binding. A helical transmembrane segment spans residues 447–471 (RARAAAAGFEKGIDRDFEPVLSMTP).

The protein belongs to the PsbB/PsbC family. PsbC subfamily. As to quaternary structure, PSII is composed of 1 copy each of membrane proteins PsbA, PsbB, PsbC, PsbD, PsbE, PsbF, PsbH, PsbI, PsbJ, PsbK, PsbL, PsbM, PsbT, PsbX, PsbY, PsbZ, Psb30/Ycf12, at least 3 peripheral proteins of the oxygen-evolving complex and a large number of cofactors. It forms dimeric complexes. It depends on Binds multiple chlorophylls and provides some of the ligands for the Ca-4Mn-5O cluster of the oxygen-evolving complex. It may also provide a ligand for a Cl- that is required for oxygen evolution. PSII binds additional chlorophylls, carotenoids and specific lipids. as a cofactor.

It localises to the plastid. The protein localises to the chloroplast thylakoid membrane. Its function is as follows. One of the components of the core complex of photosystem II (PSII). It binds chlorophyll and helps catalyze the primary light-induced photochemical processes of PSII. PSII is a light-driven water:plastoquinone oxidoreductase, using light energy to abstract electrons from H(2)O, generating O(2) and a proton gradient subsequently used for ATP formation. This Atropa belladonna (Belladonna) protein is Photosystem II CP43 reaction center protein.